Here is a 217-residue protein sequence, read N- to C-terminus: MTTKKRPVGKKKFVSFSDDDALSRTGRLPKNLPQHGSPPVYVRRTWQTIPFHLIVLSYWFIKHSNGYDVRKCTWLLVPCQVLYLALQFNPATVYGNKILKLNYALLAVSGVTCILLTIPCMLLVVLFGAPFLEMLDKTWLLSLHCCVLSYPAVYSVLNSDFKVGFFKKYFISIAVGCWISCLAIPLDWDRPWQEWPIPLVVGAQLGAMFGYTFCSQL.

6 helical membrane-spanning segments follow: residues 45–61 (TWQT…YWFI), 74–94 (WLLV…ATVY), 111–131 (VTCI…GAPF), 138–158 (TWLL…SVLN), 169–189 (YFIS…LDWD), and 195–215 (WPIP…TFCS).

It belongs to the PIGF family.

It localises to the endoplasmic reticulum membrane. The protein operates within glycolipid biosynthesis; glycosylphosphatidylinositol-anchor biosynthesis. Functionally, acts in the GPI biosynthetic pathway between GlcNAc-PI synthesis and GPI transfer to protein. This chain is Glycosylphosphatidylinositol anchor biosynthesis protein 11 (GPI11), found in Eremothecium gossypii (strain ATCC 10895 / CBS 109.51 / FGSC 9923 / NRRL Y-1056) (Yeast).